Consider the following 64-residue polypeptide: Large ribosomal subunit protein uL29 (64 aa).

This sequence belongs to the universal ribosomal protein uL29 family.

The sequence is that of Large ribosomal subunit protein uL29 from Solidesulfovibrio magneticus (strain ATCC 700980 / DSM 13731 / RS-1) (Desulfovibrio magneticus).